The primary structure comprises 84 residues: Toxin Tb1 (84 aa).

A signal peptide spans 1 to 20; sequence MKGMILFISCLLLIGIVVEC. One can recognise an LCN-type CS-alpha/beta domain in the interval 21–82; it reads KEGYLMDHEG…VWDRATNKCG (62 aa). 4 cysteine pairs are disulfide-bonded: Cys31–Cys81, Cys35–Cys57, Cys43–Cys62, and Cys47–Cys64. A Cysteine amide modification is found at Cys81.

Belongs to the long (4 C-C) scorpion toxin superfamily. Sodium channel inhibitor family. Beta subfamily. As to expression, expressed by the venom gland.

The protein resides in the secreted. Functionally, beta toxins bind voltage-independently at site-4 of sodium channels (Nav) and shift the voltage of activation toward more negative potentials thereby affecting sodium channel activation and promoting spontaneous and repetitive firing. Is lethal to mice. The protein is Toxin Tb1 of Tityus bahiensis (Brazilian scorpion).